A 388-amino-acid polypeptide reads, in one-letter code: Chorismate synthase (388 aa).

NADP(+) contacts are provided by Arg39 and Arg45. Residues 130–132 (RSS), 251–252 (NA), Gly296, 311–315 (KPIPT), and Arg337 each bind FMN.

This sequence belongs to the chorismate synthase family. Homotetramer. FMNH2 is required as a cofactor.

The catalysed reaction is 5-O-(1-carboxyvinyl)-3-phosphoshikimate = chorismate + phosphate. Its pathway is metabolic intermediate biosynthesis; chorismate biosynthesis; chorismate from D-erythrose 4-phosphate and phosphoenolpyruvate: step 7/7. Catalyzes the anti-1,4-elimination of the C-3 phosphate and the C-6 proR hydrogen from 5-enolpyruvylshikimate-3-phosphate (EPSP) to yield chorismate, which is the branch point compound that serves as the starting substrate for the three terminal pathways of aromatic amino acid biosynthesis. This reaction introduces a second double bond into the aromatic ring system. The chain is Chorismate synthase from Streptococcus suis (strain 98HAH33).